A 414-amino-acid polypeptide reads, in one-letter code: Nuclear localization sequence-binding protein (414 aa).

Disordered regions lie at residues 1–172, 244–264, and 336–414; these read MAKT…TIFV, STSK…TPSE, and RPVR…KTFD. Residues 10-26 show a composition bias toward basic and acidic residues; sequence NKKEVKASKQAKEEKAK. 2 stretches are compositionally biased toward low complexity: residues 27–44 and 54–73; these read AVSS…SSSE and ESSS…SSSD. Positions 78-87 are enriched in basic and acidic residues; the sequence is AETKKEESKD. 9 positions are modified to phosphoserine: serine 93, serine 95, serine 96, serine 97, serine 116, serine 127, serine 129, serine 131, and serine 143. The segment covering 96 to 105 has biased composition (acidic residues); it reads SSDEEEEEEK. The span at 106-117 shows a compositional bias: basic and acidic residues; that stretch reads EETKKEESKESS. Residues 118–128 are compositionally biased toward low complexity; it reads SSDSSSSSSSD. A compositionally biased stretch (basic and acidic residues) spans 134 to 144; it reads EESNDKKRKSE. RRM domains are found at residues 168-246 and 267-345; these read ATIF…MSTS and DTLF…FSSP. Residues 351–386 show a composition bias toward gly residues; that stretch reads GGRGGSRGFGGRGGGRGGNRGFGGRGGARGGRGGFR. Arginine 353 carries the post-translational modification Omega-N-methylarginine. The segment at 353–384 is RGG-box; sequence RGGSRGFGGRGGGRGGNRGFGGRGGARGGRGG. Asymmetric dimethylarginine; by HMT1; alternate is present on residues arginine 357, arginine 362, and arginine 366. Omega-N-methylarginine; by HMT1; alternate occurs at positions 357, 362, and 366. Positions 366-384 are RNA-binding RGG-box; that stretch reads RGGNRGFGGRGGARGGRGG. Residue arginine 370 is modified to Omega-N-methylarginine. Asymmetric dimethylarginine; by HMT1; alternate is present on residues arginine 375, arginine 379, and arginine 382. An omega-N-methylarginine; by HMT1; alternate mark is found at arginine 375, arginine 379, and arginine 382. Arginine 386 bears the Omega-N-methylarginine mark.

It belongs to the RRM GAR family. Post-translationally, methylated by HMT1, forming asymmetric dimethylarginines (DMA) within a domain referred to as an RGG box, made up of repeated Gly-Gly dipeptides interspersed with Arg and aromatic residues. In terms of processing, pyrophosphorylated by 5-diphosphoinositol pentakisphosphate (5-IP7). Serine pyrophosphorylation is achieved by Mg(2+)-dependent, but enzyme independent transfer of a beta-phosphate from a inositol pyrophosphate to a pre-phosphorylated serine residue.

The protein resides in the nucleus. The protein localises to the nucleolus. In terms of biological role, involved in pre-rRNA processing. Specifically binds nuclear localization sequences. Candidate for a receptor at the nucleus that may be involved in both RNA and protein transport. Binds telomeric sequences of the type (TG[1-3])n in vitro. The chain is Nuclear localization sequence-binding protein from Saccharomyces cerevisiae (strain ATCC 204508 / S288c) (Baker's yeast).